Consider the following 1535-residue polypeptide: Protein artichoke (1535 aa).

A signal peptide spans 1-19 (MMLLPIFLLLCIGINLIRA). LRR repeat units lie at residues 64–87 (KGRIDELVLENNQLPALPGRFFGS), 89–110 (QIVRLMLRHNSIERVSNGWLNE), 112–135 (ENGLVEIFVVEPQLRSIPAESLNG), 136–157 (MINMLAITIQSEELKHLPDFSG), 158–181 (LLSLTYLSVQTGALQELPSHLFRH), 183–206 (PKLQHIHITGGSGLTRLEAGLFDG), 207–230 (LISLKNLDLSHNGLNWIHLRALSR), 231–256 (LPNLVSLKLSHNQISDVGMVGRIVKD), 257–280 (LEHLKKLRLDNNLITVIEDGSFVD), 281–304 (LPNLSELHLNDNRITELQYGAFLR), 306–328 (PQLKTIYLQNNLIRRIHPESLLQ), 331–356 (GSGVEAVHMYNNEIGHVEALRALLDA), 357–380 (LPRLRYLDMSGNLLSELPYGALRG), 382–404 (GTLEQLHLNHNHLRLIERDALMA), 406–429 (PALRELRMRNNSLSSDLPLPFWNL), 430–452 (PGLKGLDLAQNQFARVDSQLLAG), 453–476 (LPSLRRLDLSENGLIELAPNSFRH), 478–500 (PLLETLNISSNELTKIHSSTLIH), 521–545 (LPRIVERISLKGNQITSLPAAASKD), 548–571 (LPNLRMLDLSQNRIEQLPRHGFQG), 573–595 (MELRVLSLAQNELRQLKDTSFIG), 597–619 (QRLELLHLQENQLGEADERALLP), 620–643 (LAELRNLNLQSNKLEAITDNFFSN), 645–667 (SRLEQLDLSRNLIRSISPTAFDT), 669–691 (RSLEYLDLSGNALLDISVGLGNL), 692–714 (NNLRDIDLSYNQISRIQSDVIGG), 716–738 (RNVVEIRLSNNLIVELQQGTFRN), 739–762 (LPKLQYLDLSSNEIRNVEPGALKG), 764–786 (DELQEFVLADNKLVELKDHVFEE), 788–810 (PSLLASHFQYNKLRYISPESFHN), 811–834 (ANSLVFLNLSNNHFRNMENIGLRS), 835–858 (MRNLEVLDLSTNGVKLVSTMPLKA), 860–882 (NWLVELKMDNNQICRIQGSPFET), and 883–906 (MPRLRVLSMRNNQLRSIKERTFRN). The region spanning 919–963 (NPIDCNCEMQWLSVWLQETNFPYPGPKCQDGRLLRSARMERSLCV) is the LRRCT domain. 4 disordered regions span residues 1036–1055 (HSAISTSQRPKPTPTINSNI), 1253–1331 (TQAR…DSQY), 1377–1416 (VTTTTPQSPSDNQVTLAGPTSTVPPPPPASPPLRGGGRST), and 1429–1449 (AQPTAEEYQRTTPSGDNEGVA). Polar residues predominate over residues 1253-1270 (TQARPKPTKSSGESSETA). Composition is skewed to low complexity over residues 1271 to 1285 (TYEVTETTPDITTTT) and 1293 to 1315 (TSTTKASTTTTRSTTTTSTTQVT). Polar residues-rich tracts occupy residues 1316–1328 (PAENNASSSTELD) and 1377–1391 (VTTTTPQSPSDNQVT). Residues 1398–1407 (TVPPPPPASP) show a composition bias toward pro residues.

The protein localises to the secreted. It is found in the extracellular space. It localises to the extracellular matrix. The protein resides in the cytoplasm. In terms of biological role, required for normal morphology and function of ciliated sensory organs. The sequence is that of Protein artichoke from Drosophila melanogaster (Fruit fly).